Here is a 463-residue protein sequence, read N- to C-terminus: Phosphoglucosamine mutase (463 aa).

Ser-110 functions as the Phosphoserine intermediate in the catalytic mechanism. Residues Ser-110, Asp-255, Asp-257, and Asp-259 each coordinate Mg(2+). Ser-110 bears the Phosphoserine mark.

It belongs to the phosphohexose mutase family. Requires Mg(2+) as cofactor. Post-translationally, activated by phosphorylation.

It carries out the reaction alpha-D-glucosamine 1-phosphate = D-glucosamine 6-phosphate. In terms of biological role, catalyzes the conversion of glucosamine-6-phosphate to glucosamine-1-phosphate. The protein is Phosphoglucosamine mutase of Koribacter versatilis (strain Ellin345).